The sequence spans 197 residues: Large ribosomal subunit protein mL58 (197 aa).

The transit peptide at M1–N20 directs the protein to the mitochondrion.

This sequence belongs to the mitochondrion-specific ribosomal protein mL58 family. Component of the mitochondrial large ribosomal subunit (mt-LSU). Mature yeast 74S mitochondrial ribosomes consist of a small (37S) and a large (54S) subunit. The 37S small subunit contains a 15S ribosomal RNA (15S mt-rRNA) and at least 32 different proteins. The 54S large subunit contains a 21S rRNA (21S mt-rRNA) and at least 45 different proteins.

Its subcellular location is the mitochondrion. Functionally, component of the mitochondrial ribosome (mitoribosome), a dedicated translation machinery responsible for the synthesis of mitochondrial genome-encoded proteins, including at least some of the essential transmembrane subunits of the mitochondrial respiratory chain. The mitoribosomes are attached to the mitochondrial inner membrane and translation products are cotranslationally integrated into the membrane. The chain is Large ribosomal subunit protein mL58 (mrpl20) from Schizosaccharomyces pombe (strain 972 / ATCC 24843) (Fission yeast).